The following is a 336-amino-acid chain: MTIPLRFGYKASSEQFGPNELLDFGVLAEEMGFDSVFLSDHLQPWMHDGGHAPNALPWLGALGARTERVIIGTSVLTPTFRYHPGVIAQVFATLGVMYPGRVVLGVGTGEALNEVTLGLEWPEAPERFQRLKEAITIINELWAGERVTYEGTYYSVKDATIYDRPEQKVPIYIGASGPAATRLAGRIAEGYITTSGKDPELYTEKLLPALDDGLSKAGRTRDDVDTLMEVKVSYHPDHDTALEKTRFWAPLALTAEEKMSVHDPIEMQRLANELPIERAASRFIVSTDPDEHVERIARYVDLGFRHLVFHDPGHDQEQFLRMYGEEILPRLRKRFA.

Asp40 serves as a coordination point for coenzyme F420-(gamma-Glu)n. His41 (proton donor) is an active-site residue. Coenzyme F420-(gamma-Glu)n is bound by residues Thr77 and 108 to 109 (TG). The active-site Proton acceptor is the Glu110. Residues Asn113, 176 to 177 (SG), and 179 to 180 (AA) contribute to the coenzyme F420-(gamma-Glu)n site. Residues Thr194, Lys197, Lys258, and Arg282 each coordinate substrate.

It belongs to the F420-dependent glucose-6-phosphate dehydrogenase family. As to quaternary structure, homodimer.

It carries out the reaction oxidized coenzyme F420-(gamma-L-Glu)(n) + D-glucose 6-phosphate + H(+) = 6-phospho-D-glucono-1,5-lactone + reduced coenzyme F420-(gamma-L-Glu)(n). In terms of biological role, catalyzes the coenzyme F420-dependent oxidation of glucose 6-phosphate (G6P) to 6-phosphogluconolactone. The sequence is that of F420-dependent glucose-6-phosphate dehydrogenase from Microbacterium testaceum (strain StLB037).